Consider the following 358-residue polypeptide: UDP-N-acetylglucosamine--N-acetylmuramyl-(pentapeptide) pyrophosphoryl-undecaprenol N-acetylglucosamine transferase (358 aa).

UDP-N-acetyl-alpha-D-glucosamine-binding positions include 11 to 13 (TGG), Asn-124, Arg-164, Ser-195, and Gln-291.

Belongs to the glycosyltransferase 28 family. MurG subfamily.

It localises to the cell inner membrane. It catalyses the reaction di-trans,octa-cis-undecaprenyl diphospho-N-acetyl-alpha-D-muramoyl-L-alanyl-D-glutamyl-meso-2,6-diaminopimeloyl-D-alanyl-D-alanine + UDP-N-acetyl-alpha-D-glucosamine = di-trans,octa-cis-undecaprenyl diphospho-[N-acetyl-alpha-D-glucosaminyl-(1-&gt;4)]-N-acetyl-alpha-D-muramoyl-L-alanyl-D-glutamyl-meso-2,6-diaminopimeloyl-D-alanyl-D-alanine + UDP + H(+). Its pathway is cell wall biogenesis; peptidoglycan biosynthesis. Cell wall formation. Catalyzes the transfer of a GlcNAc subunit on undecaprenyl-pyrophosphoryl-MurNAc-pentapeptide (lipid intermediate I) to form undecaprenyl-pyrophosphoryl-MurNAc-(pentapeptide)GlcNAc (lipid intermediate II). The protein is UDP-N-acetylglucosamine--N-acetylmuramyl-(pentapeptide) pyrophosphoryl-undecaprenol N-acetylglucosamine transferase of Leptospira borgpetersenii serovar Hardjo-bovis (strain JB197).